A 272-amino-acid chain; its full sequence is Hemin import ATP-binding protein HmuV (272 aa).

One can recognise an ABC transporter domain in the interval 2–255 (LNADHLHVAR…EPIARCYGFR (254 aa)). 34 to 41 (GRNGAGKS) provides a ligand contact to ATP.

The protein belongs to the ABC transporter superfamily. Heme (hemin) importer (TC 3.A.1.14.5) family. In terms of assembly, the complex is composed of two ATP-binding proteins (HmuV), two transmembrane proteins (HmuU) and a solute-binding protein (HmuT).

The protein resides in the cell inner membrane. In terms of biological role, part of the ABC transporter complex HmuTUV involved in hemin import. Responsible for energy coupling to the transport system. The chain is Hemin import ATP-binding protein HmuV from Burkholderia mallei (strain ATCC 23344).